Consider the following 354-residue polypeptide: Uroporphyrinogen decarboxylase (354 aa).

Substrate-binding positions include 27–31 (RQAGR), Asp77, Tyr153, Thr208, and His326.

This sequence belongs to the uroporphyrinogen decarboxylase family. Homodimer.

Its subcellular location is the cytoplasm. It catalyses the reaction uroporphyrinogen III + 4 H(+) = coproporphyrinogen III + 4 CO2. The protein operates within porphyrin-containing compound metabolism; protoporphyrin-IX biosynthesis; coproporphyrinogen-III from 5-aminolevulinate: step 4/4. Catalyzes the decarboxylation of four acetate groups of uroporphyrinogen-III to yield coproporphyrinogen-III. This Neisseria meningitidis serogroup C (strain 053442) protein is Uroporphyrinogen decarboxylase.